The chain runs to 312 residues: Glyoxylate/hydroxypyruvate reductase A (312 aa).

The active site involves R227. H275 serves as the catalytic Proton donor.

The protein belongs to the D-isomer specific 2-hydroxyacid dehydrogenase family. GhrA subfamily.

It localises to the cytoplasm. The catalysed reaction is glycolate + NADP(+) = glyoxylate + NADPH + H(+). It carries out the reaction (R)-glycerate + NAD(+) = 3-hydroxypyruvate + NADH + H(+). The enzyme catalyses (R)-glycerate + NADP(+) = 3-hydroxypyruvate + NADPH + H(+). In terms of biological role, catalyzes the NADPH-dependent reduction of glyoxylate and hydroxypyruvate into glycolate and glycerate, respectively. The polypeptide is Glyoxylate/hydroxypyruvate reductase A (Klebsiella pneumoniae (strain 342)).